We begin with the raw amino-acid sequence, 606 residues long: 4-hydroxy-3-methylbut-2-en-1-yl diphosphate synthase (flavodoxin) (606 aa).

[4Fe-4S] cluster-binding residues include C513, C516, C547, and E554.

This sequence belongs to the IspG family. Requires [4Fe-4S] cluster as cofactor.

The catalysed reaction is (2E)-4-hydroxy-3-methylbut-2-enyl diphosphate + oxidized [flavodoxin] + H2O + 2 H(+) = 2-C-methyl-D-erythritol 2,4-cyclic diphosphate + reduced [flavodoxin]. The protein operates within isoprenoid biosynthesis; isopentenyl diphosphate biosynthesis via DXP pathway; isopentenyl diphosphate from 1-deoxy-D-xylulose 5-phosphate: step 5/6. Its function is as follows. Converts 2C-methyl-D-erythritol 2,4-cyclodiphosphate (ME-2,4cPP) into 1-hydroxy-2-methyl-2-(E)-butenyl 4-diphosphate. The polypeptide is 4-hydroxy-3-methylbut-2-en-1-yl diphosphate synthase (flavodoxin) (Chlamydia caviae (strain ATCC VR-813 / DSM 19441 / 03DC25 / GPIC) (Chlamydophila caviae)).